The primary structure comprises 358 residues: D-xylulose reductase A (358 aa).

Cys47, His72, and Glu73 together coordinate Zn(2+). Gly182–Gly187 contributes to the NAD(+) binding site.

It belongs to the zinc-containing alcohol dehydrogenase family. It depends on Zn(2+) as a cofactor.

The catalysed reaction is xylitol + NAD(+) = D-xylulose + NADH + H(+). The protein operates within carbohydrate degradation; L-arabinose degradation via L-arabinitol; D-xylulose 5-phosphate from L-arabinose (fungal route): step 4/5. Functionally, xylitol dehydrogenase which catalyzes the conversion of xylitol to D-xylulose. Xylose is a major component of hemicelluloses such as xylan. Most fungi utilize D-xylose via three enzymatic reactions, xylose reductase (XR), xylitol dehydrogenase (XDH), and xylulokinase, to form xylulose 5-phosphate, which enters pentose phosphate pathway. The protein is D-xylulose reductase A (xdhA) of Aspergillus oryzae (strain ATCC 42149 / RIB 40) (Yellow koji mold).